The chain runs to 201 residues: Small ribosomal subunit protein uS4c (201 aa).

The interval 17–44 is disordered; the sequence is ALPGLTNKKPRTGSDLRNQSRSGKKSQY. The S4 RNA-binding domain maps to 89–149; that stretch reads MRLDNILFRL…DEQKSRALIQ (61 aa).

The protein belongs to the universal ribosomal protein uS4 family. In terms of assembly, part of the 30S ribosomal subunit. Contacts protein S5. The interaction surface between S4 and S5 is involved in control of translational fidelity.

It is found in the plastid. The protein resides in the chloroplast. Its function is as follows. One of the primary rRNA binding proteins, it binds directly to 16S rRNA where it nucleates assembly of the body of the 30S subunit. With S5 and S12 plays an important role in translational accuracy. This chain is Small ribosomal subunit protein uS4c (rps4), found in Solanum bulbocastanum (Wild potato).